A 99-amino-acid polypeptide reads, in one-letter code: UPF0751 protein BCE_A0020 (99 aa).

It belongs to the UPF0751 family.

The chain is UPF0751 protein BCE_A0020 from Bacillus cereus (strain ATCC 10987 / NRS 248).